The following is a 330-amino-acid chain: Aspartate--ammonia ligase (330 aa).

The protein belongs to the class-II aminoacyl-tRNA synthetase family. AsnA subfamily.

The protein localises to the cytoplasm. The catalysed reaction is L-aspartate + NH4(+) + ATP = L-asparagine + AMP + diphosphate + H(+). It participates in amino-acid biosynthesis; L-asparagine biosynthesis; L-asparagine from L-aspartate (ammonia route): step 1/1. This Escherichia coli O17:K52:H18 (strain UMN026 / ExPEC) protein is Aspartate--ammonia ligase.